Reading from the N-terminus, the 157-residue chain is Transcription elongation factor GreA (157 aa).

Residues 46–67 (AEYHAARERQSFIEGRIKELED) adopt a coiled-coil conformation.

The protein belongs to the GreA/GreB family.

Necessary for efficient RNA polymerase transcription elongation past template-encoded arresting sites. The arresting sites in DNA have the property of trapping a certain fraction of elongating RNA polymerases that pass through, resulting in locked ternary complexes. Cleavage of the nascent transcript by cleavage factors such as GreA or GreB allows the resumption of elongation from the new 3'terminus. GreA releases sequences of 2 to 3 nucleotides. In Rhodospirillum rubrum (strain ATCC 11170 / ATH 1.1.1 / DSM 467 / LMG 4362 / NCIMB 8255 / S1), this protein is Transcription elongation factor GreA.